Consider the following 319-residue polypeptide: Acetyl esterase (319 aa).

The short motif at 91–93 is the Involved in the stabilization of the negatively charged intermediate by the formation of the oxyanion hole element; that stretch reads HGG. Residues Ser-165, Asp-262, and His-292 contribute to the active site.

This sequence belongs to the 'GDXG' lipolytic enzyme family. Homodimer. Interacts with MalT and MelA.

The protein resides in the cytoplasm. Its function is as follows. Displays esterase activity towards short chain fatty esters (acyl chain length of up to 8 carbons). Able to hydrolyze triacetylglycerol (triacetin) and tributyrylglycerol (tributyrin), but not trioleylglycerol (triolein) or cholesterol oleate. Negatively regulates MalT activity by antagonizing maltotriose binding. Inhibits MelA galactosidase activity. The protein is Acetyl esterase of Shigella flexneri.